A 305-amino-acid chain; its full sequence is Putative glutamine amidotransferase MTH_191 (305 aa).

The active site involves cysteine 2. The 304-residue stretch at 2–305 folds into the Glutamine amidotransferase type-2 domain; sequence CGIAGVVYKD…SPGEVRVYEI (304 aa).

This chain is Putative glutamine amidotransferase MTH_191, found in Methanothermobacter thermautotrophicus (strain ATCC 29096 / DSM 1053 / JCM 10044 / NBRC 100330 / Delta H) (Methanobacterium thermoautotrophicum).